Here is a 370-residue protein sequence, read N- to C-terminus: Protein RecA (370 aa).

The disordered stretch occupies residues 1-20; that stretch reads MSFEERRKKDSKESSSKEKD. ATP is bound at residue 78-85; that stretch reads GPESSGKT.

The protein belongs to the RecA family.

Its subcellular location is the cytoplasm. Can catalyze the hydrolysis of ATP in the presence of single-stranded DNA, the ATP-dependent uptake of single-stranded DNA by duplex DNA, and the ATP-dependent hybridization of homologous single-stranded DNAs. It interacts with LexA causing its activation and leading to its autocatalytic cleavage. The protein is Protein RecA of Prochlorococcus marinus (strain MIT 9515).